Consider the following 840-residue polypeptide: Cancer-associated gene 1 protein homolog (840 aa).

A coiled-coil region spans residues 303–559 (MALNEILKKL…HVARSEEQNY (257 aa)). The tract at residues 800 to 840 (EDLIRKPREKARKPRSKSLENHPKSMTMMPAVFKENRNDLD) is disordered. The span at 806–815 (PREKARKPRS) shows a compositional bias: basic residues.

This chain is Cancer-associated gene 1 protein homolog (CAGE1), found in Macaca fascicularis (Crab-eating macaque).